The following is a 699-amino-acid chain: D-(-)-3-hydroxybutyrate oligomer hydrolase (699 aa).

The signal sequence occupies residues 1-33; sequence MTAIRGGSRRAPGLALALLGGVLLGACHGDENA. S311 (charge relay system) is an active-site residue.

The protein belongs to the D-(-)-3-hydroxybutyrate oligomer hydrolase family.

It is found in the secreted. The enzyme catalyses (3R)-hydroxybutanoate dimer + H2O = 2 (R)-3-hydroxybutanoate + H(+). Its pathway is lipid metabolism; butanoate metabolism. In terms of biological role, participates in the degradation of poly-3-hydroxybutyrate (PHB). It works downstream of poly(3-hydroxybutyrate) depolymerase, hydrolyzing D(-)-3-hydroxybutyrate oligomers of various length (3HB-oligomers) into 3HB-monomers. The chain is D-(-)-3-hydroxybutyrate oligomer hydrolase from Burkholderia pseudomallei (strain 1710b).